The primary structure comprises 114 residues: Procyclic form-specific polypeptide A-alpha (114 aa).

An N-terminal signal peptide occupies residues M1 to A27. The disordered stretch occupies residues S33 to T95. The segment covering D47–P89 has biased composition (acidic residues). 7 tandem repeats follow at residues G48 to P52, G56 to T60, G61 to T65, G66 to T70, G71 to T75, G76 to T80, and G81 to T85. The segment at G48–T85 is 7 X 5 AA tandem repeats of G-P-E-E-[PT]. The GPI-anchor amidated glycine moiety is linked to residue G92. Residues A93–F114 constitute a propeptide that is removed on maturation.

It localises to the cell membrane. Its function is as follows. Major surface antigen of procyclic forms. This is Procyclic form-specific polypeptide A-alpha (PARPA-ALPHA) from Trypanosoma brucei brucei.